The following is a 610-amino-acid chain: UvrABC system protein C (610 aa).

Residues Ser16 to Val94 enclose the GIY-YIG domain. Residues Asp204–Val239 enclose the UVR domain.

This sequence belongs to the UvrC family. Interacts with UvrB in an incision complex.

It localises to the cytoplasm. In terms of biological role, the UvrABC repair system catalyzes the recognition and processing of DNA lesions. UvrC both incises the 5' and 3' sides of the lesion. The N-terminal half is responsible for the 3' incision and the C-terminal half is responsible for the 5' incision. The chain is UvrABC system protein C from Salmonella paratyphi C (strain RKS4594).